The following is a 378-amino-acid chain: tRNA-specific 2-thiouridylase MnmA (378 aa).

ATP is bound by residues 9–16 (GVSGGVDS) and M35. Positions 94–96 (NPD) are interaction with target base in tRNA. The Nucleophile role is filled by C99. A disulfide bridge links C99 with C195. G123 is an ATP binding site. The interaction with tRNA stretch occupies residues 145–147 (KDQ). Residue C195 is the Cysteine persulfide intermediate of the active site. The tract at residues 307–308 (RY) is interaction with tRNA.

The protein belongs to the MnmA/TRMU family.

The protein resides in the cytoplasm. It catalyses the reaction S-sulfanyl-L-cysteinyl-[protein] + uridine(34) in tRNA + AH2 + ATP = 2-thiouridine(34) in tRNA + L-cysteinyl-[protein] + A + AMP + diphosphate + H(+). In terms of biological role, catalyzes the 2-thiolation of uridine at the wobble position (U34) of tRNA, leading to the formation of s(2)U34. The sequence is that of tRNA-specific 2-thiouridylase MnmA from Xanthomonas campestris pv. campestris (strain 8004).